Here is a 393-residue protein sequence, read N- to C-terminus: Dual-specificity RNA methyltransferase RlmN (393 aa).

The active-site Proton acceptor is the Glu-114. The region spanning 120 to 359 (EDDRATLCVS…VIVRKTRGDD (240 aa)) is the Radical SAM core domain. Cys-127 and Cys-364 are joined by a disulfide. Positions 134, 138, and 141 each coordinate [4Fe-4S] cluster. S-adenosyl-L-methionine-binding positions include 188–189 (GE), Ser-220, 242–244 (SLH), and Asn-321. The S-methylcysteine intermediate role is filled by Cys-364.

This sequence belongs to the radical SAM superfamily. RlmN family. [4Fe-4S] cluster is required as a cofactor.

It is found in the cytoplasm. It catalyses the reaction adenosine(2503) in 23S rRNA + 2 reduced [2Fe-2S]-[ferredoxin] + 2 S-adenosyl-L-methionine = 2-methyladenosine(2503) in 23S rRNA + 5'-deoxyadenosine + L-methionine + 2 oxidized [2Fe-2S]-[ferredoxin] + S-adenosyl-L-homocysteine. The catalysed reaction is adenosine(37) in tRNA + 2 reduced [2Fe-2S]-[ferredoxin] + 2 S-adenosyl-L-methionine = 2-methyladenosine(37) in tRNA + 5'-deoxyadenosine + L-methionine + 2 oxidized [2Fe-2S]-[ferredoxin] + S-adenosyl-L-homocysteine. In terms of biological role, specifically methylates position 2 of adenine 2503 in 23S rRNA and position 2 of adenine 37 in tRNAs. m2A2503 modification seems to play a crucial role in the proofreading step occurring at the peptidyl transferase center and thus would serve to optimize ribosomal fidelity. The protein is Dual-specificity RNA methyltransferase RlmN of Actinobacillus pleuropneumoniae serotype 3 (strain JL03).